Consider the following 863-residue polypeptide: Leucine--tRNA ligase (863 aa).

Positions 42–52 (PYPSGRLHMGH) match the 'HIGH' region motif. The 'KMSKS' region signature appears at 618 to 622 (KMSKS). An ATP-binding site is contributed by Lys-621.

Belongs to the class-I aminoacyl-tRNA synthetase family.

It is found in the cytoplasm. The catalysed reaction is tRNA(Leu) + L-leucine + ATP = L-leucyl-tRNA(Leu) + AMP + diphosphate. This is Leucine--tRNA ligase from Colwellia psychrerythraea (strain 34H / ATCC BAA-681) (Vibrio psychroerythus).